The sequence spans 304 residues: Methionyl-tRNA formyltransferase (304 aa).

111-114 (SLLP) provides a ligand contact to (6S)-5,6,7,8-tetrahydrofolate.

It belongs to the Fmt family.

The catalysed reaction is L-methionyl-tRNA(fMet) + (6R)-10-formyltetrahydrofolate = N-formyl-L-methionyl-tRNA(fMet) + (6S)-5,6,7,8-tetrahydrofolate + H(+). Its function is as follows. Attaches a formyl group to the free amino group of methionyl-tRNA(fMet). The formyl group appears to play a dual role in the initiator identity of N-formylmethionyl-tRNA by promoting its recognition by IF2 and preventing the misappropriation of this tRNA by the elongation apparatus. The polypeptide is Methionyl-tRNA formyltransferase (Campylobacter fetus subsp. fetus (strain 82-40)).